The primary structure comprises 440 residues: Transposon Ty1-ML1 Gag polyprotein (440 aa).

Polar residues-rich tracts occupy residues 1–23, 48–60, and 127–152; these read MESQ…SVTS, TKAN…TPAS, and QSQF…GNTF. Disordered stretches follow at residues 1-88, 126-173, and 352-440; these read MESQ…YPQQ, PQSQ…RPPP, and GSRN…PETY. A compositionally biased stretch (low complexity) spans 153-165; it reads TDSSSADSDMTST. Positions 299–401 are RNA-binding; the sequence is NNGIHINNKV…NSKSKTARAH (103 aa). A compositionally biased stretch (low complexity) spans 402–418; that stretch reads NVSTSNNSPSTDNDSIS. S416 bears the Phosphoserine mark. The span at 419–428 shows a compositional bias: polar residues; sequence KSTTEPIQLN. The span at 429–440 shows a compositional bias: basic and acidic residues; the sequence is NKHDLHLRPETY.

As to quaternary structure, homotrimer.

The protein localises to the cytoplasm. Capsid protein (CA) is the structural component of the virus-like particle (VLP), forming the shell that encapsulates the retrotransposons dimeric RNA genome. The particles are assembled from trimer-clustered units and there are holes in the capsid shells that allow for the diffusion of macromolecules. CA also has nucleocapsid-like chaperone activity, promoting primer tRNA(i)-Met annealing to the multipartite primer-binding site (PBS), dimerization of Ty1 RNA and initiation of reverse transcription. The sequence is that of Transposon Ty1-ML1 Gag polyprotein (TY1A-ML1) from Saccharomyces cerevisiae (strain ATCC 204508 / S288c) (Baker's yeast).